We begin with the raw amino-acid sequence, 591 residues long: Probable acetolactate synthase large subunit (591 aa).

Glu-47 serves as a coordination point for thiamine diphosphate. FAD contacts are provided by residues Arg-149, 258–279 (HGTK…IGCR), and 301–320 (DIDP…IVGD). Residues 396 to 476 (QNQMWMAHFF…VVICIFDNRT (81 aa)) form a thiamine pyrophosphate binding region. Mg(2+) is bound by residues Asp-447 and Asn-474.

Belongs to the TPP enzyme family. As to quaternary structure, dimer of large and small chains. Requires Mg(2+) as cofactor. Thiamine diphosphate is required as a cofactor.

It catalyses the reaction 2 pyruvate + H(+) = (2S)-2-acetolactate + CO2. Its pathway is amino-acid biosynthesis; L-isoleucine biosynthesis; L-isoleucine from 2-oxobutanoate: step 1/4. It participates in amino-acid biosynthesis; L-valine biosynthesis; L-valine from pyruvate: step 1/4. The sequence is that of Probable acetolactate synthase large subunit (ilvB) from Methanocaldococcus jannaschii (strain ATCC 43067 / DSM 2661 / JAL-1 / JCM 10045 / NBRC 100440) (Methanococcus jannaschii).